A 910-amino-acid polypeptide reads, in one-letter code: MPALDSLKTLRSLAVDGKTYHYYSLPEAARTLGDLGKLPMSLKVLLENLLRWEDGSTVTGDDLKALAGWLRERRSDREIQYRPARVLMQDFTGVPAVVDLAAMRAAMAKAGGDPQKINPLSPVDLVIDHSVMVDKFASESAFEQNVEIEMQRNGERYAFLRWGQNAFDNFSVVPPGTGICHQVNLEYLGRTVWTKDEDGRTYAFPDTLVGTDSHTTMINGLGVLGWGVGGIEAEAAMLGQPVSMLIPEVIGFKLTGKLREGITATDLVLTVTQMLRKKGVVGKFVEFYGDGLADLPLADRATIANMAPEYGATCGFFPVDEITLGYLRLSGRPESTVKLVEAYSKEQGLWREKGHEPVFTDTLHLDMGEVEASLAGPKRPQDRVALQNVASAFNEFLGLQLHPSSTEEGRLLSEGGGGTAVGANAAFGEIDYQHDGQTHRLKNGAVVIAAITSCTNTSNPSVMMAAGLLAKKAVEKGLQRKPWVKSSLAPGSKVVTDYFKAAGLTRYLDELGFDLVGYGCTTCIGNSGPLLEPIEKAIQQADLTVASVLSGNRNFEGRVHPLVKTNWLASPPLVVAYALAGSVRINLSEEPLGTGKDGQPVYLKDIWPSQKEIAEAIQKVDTEMFHKEYAEVFAGDEKWQAIQVPQSDTYEWQADSTYIQHPPFFEHIAEAPPAIADVEQARVLAVLGDSVTTDHISPAGNIKADSPAGRYLREHGVEPKDFNSYGSRRGNHEVMMRGTFANIRIKNEMLGGEEGGNTLYVPSGEKLAIYDAAMRYQEDGTPLVIVAGKEYGTGSSRDWAAKGTNLLGVKAVIAESFERIHRSNLVGMGVLPLQFENGQDRKSLKLTGKEVLNIRGLGGELKPHMPLSVEVTREDGSQDSFKVLCRIDTLNEVEYFKAGGILHYVLRSML.

Residues Cys454, Cys520, and Cys523 each contribute to the [4Fe-4S] cluster site.

The protein belongs to the aconitase/IPM isomerase family. In terms of assembly, monomer. [4Fe-4S] cluster is required as a cofactor.

It carries out the reaction citrate = D-threo-isocitrate. It catalyses the reaction (2S,3R)-3-hydroxybutane-1,2,3-tricarboxylate = 2-methyl-cis-aconitate + H2O. It participates in carbohydrate metabolism; tricarboxylic acid cycle; isocitrate from oxaloacetate: step 2/2. Its pathway is organic acid metabolism; propanoate degradation. Functionally, involved in the catabolism of short chain fatty acids (SCFA) via the tricarboxylic acid (TCA)(acetyl degradation route) and probably the 2-methylcitrate cycle I (propionate degradation route). Catalyzes the reversible isomerization of citrate to isocitrate via cis-aconitate. Could catalyze the hydration of 2-methyl-cis-aconitate to yield (2R,3S)-2-methylisocitrate. The apo form of AcnA functions as a RNA-binding regulatory protein. The sequence is that of Aconitate hydratase A (acnA) from Pseudomonas aeruginosa (strain ATCC 15692 / DSM 22644 / CIP 104116 / JCM 14847 / LMG 12228 / 1C / PRS 101 / PAO1).